Reading from the N-terminus, the 273-residue chain is Undecaprenyl-diphosphatase (273 aa).

8 consecutive transmembrane segments (helical) span residues 4–24, 48–68, 89–109, 116–136, 152–172, 193–213, 222–242, and 252–272; these read MELWKAIILGMVEGLTEFAPV, AANTFKVVIQLGSILAAVVVF, LNLIHVIIGLLPAGVLGVLFE, LFSTKTVLIGLVLGALLMIAA, ITYKQAFFVGLMQCLSLWPGF, ADFTFIMAVPIMAGASGLSLL, ADIPFFIAGFFSAFVFALLAI, and IRLVPFAVYRIVLAVVIYFLY.

Belongs to the UppP family.

The protein localises to the cell membrane. The enzyme catalyses di-trans,octa-cis-undecaprenyl diphosphate + H2O = di-trans,octa-cis-undecaprenyl phosphate + phosphate + H(+). Catalyzes the dephosphorylation of undecaprenyl diphosphate (UPP). Confers resistance to bacitracin. The sequence is that of Undecaprenyl-diphosphatase from Geobacillus kaustophilus (strain HTA426).